The sequence spans 139 residues: Large ribosomal subunit protein uL16 (139 aa).

Basic residues predominate over residues 1-16; the sequence is MLIPKRTKYRKQHRPV. Residues 1–22 are disordered; it reads MLIPKRTKYRKQHRPVRSGMSK.

It belongs to the universal ribosomal protein uL16 family. Part of the 50S ribosomal subunit.

In terms of biological role, binds 23S rRNA and is also seen to make contacts with the A and possibly P site tRNAs. The sequence is that of Large ribosomal subunit protein uL16 from Bifidobacterium longum (strain DJO10A).